Consider the following 485-residue polypeptide: Glutamyl-tRNA(Gln) amidotransferase subunit A (485 aa).

Residues lysine 78 and serine 153 each act as charge relay system in the active site. Serine 177 functions as the Acyl-ester intermediate in the catalytic mechanism.

This sequence belongs to the amidase family. GatA subfamily. In terms of assembly, heterotrimer of A, B and C subunits.

It carries out the reaction L-glutamyl-tRNA(Gln) + L-glutamine + ATP + H2O = L-glutaminyl-tRNA(Gln) + L-glutamate + ADP + phosphate + H(+). In terms of biological role, allows the formation of correctly charged Gln-tRNA(Gln) through the transamidation of misacylated Glu-tRNA(Gln) in organisms which lack glutaminyl-tRNA synthetase. The reaction takes place in the presence of glutamine and ATP through an activated gamma-phospho-Glu-tRNA(Gln). This chain is Glutamyl-tRNA(Gln) amidotransferase subunit A, found in Bacillus mycoides (strain KBAB4) (Bacillus weihenstephanensis).